The primary structure comprises 292 residues: Tubulin beta chain (292 aa).

Asparagine 49 and asparagine 71 together coordinate GTP. The tract at residues 265-292 (SEYQQYQDATAEEEGEFDEEEEGDEEAA) is disordered. Positions 274–292 (TAEEEGEFDEEEEGDEEAA) are enriched in acidic residues.

The protein belongs to the tubulin family. As to quaternary structure, dimer of alpha and beta chains. A typical microtubule is a hollow water-filled tube with an outer diameter of 25 nm and an inner diameter of 15 nM. Alpha-beta heterodimers associate head-to-tail to form protofilaments running lengthwise along the microtubule wall with the beta-tubulin subunit facing the microtubule plus end conferring a structural polarity. Microtubules usually have 13 protofilaments but different protofilament numbers can be found in some organisms and specialized cells. Mg(2+) serves as cofactor.

The protein localises to the cytoplasm. Its subcellular location is the cytoskeleton. Tubulin is the major constituent of microtubules, a cylinder consisting of laterally associated linear protofilaments composed of alpha- and beta-tubulin heterodimers. Microtubules grow by the addition of GTP-tubulin dimers to the microtubule end, where a stabilizing cap forms. Below the cap, tubulin dimers are in GDP-bound state, owing to GTPase activity of alpha-tubulin. The chain is Tubulin beta chain from Strongylocentrotus purpuratus (Purple sea urchin).